The primary structure comprises 736 residues: Ethylene receptor 2 (736 aa).

3 helical membrane-spanning segments follow: residues 22–42 (ISDF…VYFV), 53–73 (VLVQ…INLW), and 94–114 (AAVS…LLSV). Cu cation is bound by residues C64 and H68. In terms of domain architecture, GAF spans 157–305 (DRHTILKTTL…VVADQVAVAL (149 aa)). The 238-residue stretch at 348–585 (VMNHEMRTPM…TAIFIVKLGI (238 aa)) folds into the Histidine kinase domain. H351 bears the Phosphohistidine; by autocatalysis mark. The region spanning 613–730 (KVLVMDDNGF…KMRSVLSGLL (118 aa)) is the Response regulatory domain. D661 is modified (4-aspartylphosphate).

Belongs to the ethylene receptor family. In terms of assembly, homodimer; disulfide-linked. Requires Cu cation as cofactor. Activation probably requires a transfer of a phosphate group between a His in the transmitter domain and an Asp of the receiver domain. Leaves, flowers and fruits.

Its subcellular location is the endoplasmic reticulum membrane. It carries out the reaction ATP + protein L-histidine = ADP + protein N-phospho-L-histidine.. In terms of biological role, may act early in the ethylene signal transduction pathway, possibly as an ethylene receptor, or as a regulator of the pathway. In Solanum lycopersicum (Tomato), this protein is Ethylene receptor 2 (ETR2).